Here is a 150-residue protein sequence, read N- to C-terminus: Peptide deformylase 1 (150 aa).

Residues cysteine 88 and histidine 130 each coordinate Fe cation. Glutamate 131 is a catalytic residue. Residue histidine 134 participates in Fe cation binding.

It belongs to the polypeptide deformylase family. Fe(2+) is required as a cofactor.

The enzyme catalyses N-terminal N-formyl-L-methionyl-[peptide] + H2O = N-terminal L-methionyl-[peptide] + formate. Its function is as follows. Removes the formyl group from the N-terminal Met of newly synthesized proteins. Requires at least a dipeptide for an efficient rate of reaction. N-terminal L-methionine is a prerequisite for activity but the enzyme has broad specificity at other positions. This is Peptide deformylase 1 from Clostridium acetobutylicum (strain ATCC 824 / DSM 792 / JCM 1419 / IAM 19013 / LMG 5710 / NBRC 13948 / NRRL B-527 / VKM B-1787 / 2291 / W).